The primary structure comprises 149 residues: Calmodulin (149 aa).

An N-acetylthreonine modification is found at threonine 2. 4 EF-hand domains span residues 8-43, 44-79, 81-116, and 117-149; these read EQIAEFKEAFSLFDKDGDGTITTKELGTVMRSLGQN, PTEAELQDMINEVDADGNGTIDFPEFLTMMARKMKE, DSEEEIREAFRVFDKDGNGFISAAELRHVMTNLGEK, and LTDEEVDEMIREADIDGDGQVNYEEFVAMMTSK. Aspartate 21, aspartate 23, aspartate 25, threonine 27, glutamate 32, aspartate 57, aspartate 59, asparagine 61, threonine 63, glutamate 68, aspartate 94, aspartate 96, asparagine 98, and glutamate 105 together coordinate Ca(2+). N6,N6,N6-trimethyllysine is present on lysine 116. Residues aspartate 130, aspartate 132, aspartate 134, glutamine 136, and glutamate 141 each coordinate Ca(2+).

Belongs to the calmodulin family.

Functionally, calmodulin mediates the control of a large number of enzymes, ion channels and other proteins by Ca(2+). Among the enzymes to be stimulated by the calmodulin-Ca(2+) complex are a number of protein kinases and phosphatases. The protein is Calmodulin of Halichondria okadai (Marine sponge).